Here is a 794-residue protein sequence, read N- to C-terminus: Cadherin-12 (794 aa).

The N-terminal stretch at 1 to 23 (MLTRNCLSLLLWVLFDGGLLTPL) is a signal peptide. A propeptide spanning residues 24–54 (QPQPQQTLATEPRENVIHLPGQRSHFQRVKR) is cleaved from the precursor. Cadherin domains follow at residues 55 to 160 (GWVW…EPKF), 161 to 269 (LDGP…PPRF), 270 to 384 (PKSI…PPVF), 385 to 487 (SKPL…EFPP), and 488 to 609 (EISV…IFLP). The Extracellular segment spans residues 55–609 (GWVWNQFFVL…SCNVEAIFLP (555 aa)). Asn-256 carries N-linked (GlcNAc...) asparagine glycosylation. 3 N-linked (GlcNAc...) asparagine glycosylation sites follow: Asn-456, Asn-537, and Asn-545. A helical transmembrane segment spans residues 610-637 (VGLSTGALIAILLCIVILLAIVVLYVAL). The Cytoplasmic segment spans residues 638–794 (RRQKKKDTLM…EESYNPDKVT (157 aa)). Phosphoserine is present on Ser-787.

As to expression, brain.

Its subcellular location is the cell membrane. Functionally, cadherins are calcium-dependent cell adhesion proteins. They preferentially interact with themselves in a homophilic manner in connecting cells; cadherins may thus contribute to the sorting of heterogeneous cell types. The polypeptide is Cadherin-12 (CDH12) (Homo sapiens (Human)).